Reading from the N-terminus, the 352-residue chain is Diacylglycerol acyltransferase/mycolyltransferase Ag85C (352 aa).

The first 37 residues, 1–37 (MSFIEKVRKLRGAAATMPRRLAIAAVGASLLSGVAVA), serve as a signal peptide directing secretion. 86 to 87 (LR) serves as a coordination point for substrate. The fibronectin-binding stretch occupies residues 102 to 112 (FEEFYQSGLSV). Ser170 and Asn198 together coordinate substrate. Ser170 acts as the Nucleophile in catalysis. Glu274 is an active-site residue. Residues 276–279 (LTLR) and 306–308 (HSW) contribute to the substrate site. His306 is a catalytic residue. Positions 332-352 (TAAPAQPAQPAQPAQPAQPAT) are disordered. Residues 333-352 (AAPAQPAQPAQPAQPAQPAT) show a composition bias toward low complexity.

The protein belongs to the mycobacterial A85 antigen family. Homodimer.

Its subcellular location is the secreted. The enzyme catalyses an acyl-CoA + a 1,2-diacyl-sn-glycerol = a triacyl-sn-glycerol + CoA. It carries out the reaction 2 alpha,alpha'-trehalose 6-mycolate = alpha,alpha'-trehalose 6,6'-bismycolate + alpha,alpha-trehalose. Its function is as follows. The antigen 85 proteins (FbpA, FbpB, FbpC) are responsible for the high affinity of mycobacteria to fibronectin, a large adhesive glycoprotein, which facilitates the attachment of M.tuberculosis to murine alveolar macrophages (AMs). They also help to maintain the integrity of the cell wall by catalyzing the transfer of mycolic acids to cell wall arabinogalactan and through the synthesis of alpha,alpha-trehalose dimycolate (TDM, cord factor). They catalyze the transfer of a mycoloyl residue from one molecule of alpha,alpha-trehalose monomycolate (TMM) to another TMM, leading to the formation of TDM. This is Diacylglycerol acyltransferase/mycolyltransferase Ag85C (fbpC) from Mycobacterium avium.